Here is a 258-residue protein sequence, read N- to C-terminus: MSAYPRSYNPFDEDAEDEDARPAPWSDSRDLADGPGAPADRQQALRQEVLRRAEATAASTGRSLSLMYESERIGVVSAEELVRQRGALERTEKMVDKMEQDLKTSQKHINSIKSVFGGLVNYFRSKPAETPSAQNGTLTPQPSGRLKDAINSSKEQEAQYQASHPNLRKLQDSDSIPGGAGSAVSSEAYPRNPHLRACHQRIDSNLDELSVGLGRLKDIALGIQTEIDEQDDILDRLTSKVDKLDVSITSTERKVRQL.

Positions 1–43 (MSAYPRSYNPFDEDAEDEDARPAPWSDSRDLADGPGAPADRQQ) are disordered. Phosphoserine is present on residues serine 65, serine 77, and serine 114. The stretch at 76 to 107 (VSAEELVRQRGALERTEKMVDKMEQDLKTSQK) forms a coiled coil. Disordered stretches follow at residues 127–147 (PAET…GRLK) and 161–188 (QASH…SSEA). Residues threonine 130 and threonine 137 each carry the phosphothreonine modification. The span at 131 to 142 (PSAQNGTLTPQP) shows a compositional bias: polar residues. Phosphoserine occurs at positions 163, 182, 185, 204, and 210. The t-SNARE coiled-coil homology domain maps to 196 to 258 (RACHQRIDSN…TSTERKVRQL (63 aa)).

This sequence belongs to the SNAP-25 family. As to quaternary structure, forms a SNARE complex, composed of VAMP8, SNAP29 and STX17, involved in fusion of autophagosome with lysosome. Interacts with multiple syntaxins including STX6. Interacts with EIPR1. Interacts with STX17; this interaction is increased in the absence of TMEM39A.

The protein resides in the cytoplasm. Its subcellular location is the golgi apparatus membrane. It is found in the cytoplasmic vesicle. It localises to the autophagosome membrane. The protein localises to the cell projection. The protein resides in the cilium membrane. In terms of biological role, SNAREs, soluble N-ethylmaleimide-sensitive factor-attachment protein receptors, are essential proteins for fusion of cellular membranes. SNAREs localized on opposing membranes assemble to form a trans-SNARE complex, an extended, parallel four alpha-helical bundle that drives membrane fusion. SNAP29 is a SNARE involved in autophagy through the direct control of autophagosome membrane fusion with the lysososome membrane. Also plays a role in ciliogenesis by regulating membrane fusions. In Bos taurus (Bovine), this protein is Synaptosomal-associated protein 29.